The primary structure comprises 193 residues: Apoptosis-associated speck-like protein containing a CARD (193 aa).

In terms of domain architecture, Pyrin spans 1-91 (MGRARDAILD…AEQLQTTKEE (91 aa)). Glycyl lysine isopeptide (Lys-Gly) (interchain with G-Cter in ubiquitin) cross-links involve residues lysine 55 and lysine 172. A CARD domain is found at 105 to 193 (STARTGHFVD…PYLVMDLEQS (89 aa)). Residue serine 193 is modified to Phosphoserine.

As to quaternary structure, self-associates; enforced oligomerization induces apoptosis, NF-kappa-B regulation and interleukin-1 beta secretion. Homooligomers can form disk-like particles of approximately 12 nm diameter and approximately 1 nm height. Component of several inflammasomes containing one pattern recognition receptor/sensor, such as NLRP2, NLRP3, NLRP6, NLRC4, AIM2, MEFV or NOD2, and probably NLRC4 or NLRP12. Major component of the ASC pyroptosome, a 1-2 um supramolecular assembly (one per macrophage cell) which consists of oligomerized PYCARD dimers and CASP1. Interacts with CASP1 (precursor form); the interaction induces activation of CASP1 leading to the processing of interleukin-1 beta; PYCARD competes with RIPK2 for binding to CASP1. Interacts with NLRP3; the interaction requires the homooligomerization of NLRP3. Interacts with NLRP2, NLRC4, MEFV, CARD16, AIM2, NOD2, RIGI, RIPK2, PYDC1, PYDC2, NLRP10, CHUK, IKBKB and BAX. Interacts with CASP8. Component of the AIM2 PANoptosome complex, a multiprotein complex that drives inflammatory cell death (PANoptosis). Post-translationally, phosphorylated. In terms of processing, 'Lys-63'-linked polyubiquitination by TRAF3 is critical for speck formation and inflammasome activation. 'Lys-63'-linked deubiquitinated by USP50; a crucial step for NLRP3-mediated inflammasome activation. 'Lys-63'-linked polyubiquitination by PELI1 is also critical for speck formation and inflammasome activation. Deubiquitinated by USP3 that cleaves 'Lys-48'-linked ubiquitin chains and strengthens its stability by blocking proteasomal degradation. In terms of tissue distribution, expressed in small intestine, colon, thymus, spleen, brain, heart, skeletal muscle, kidney, lung and liver.

Its subcellular location is the cytoplasm. It localises to the inflammasome. The protein resides in the endoplasmic reticulum. The protein localises to the mitochondrion. It is found in the nucleus. Its function is as follows. Functions as a key mediator in apoptosis and inflammation. Promotes caspase-mediated apoptosis involving predominantly caspase-8 and also caspase-9 in a probable cell type-specific manner. Involved in activation of the mitochondrial apoptotic pathway, promotes caspase-8-dependent proteolytic maturation of BID independently of FADD in certain cell types and also mediates mitochondrial translocation of BAX and activates BAX-dependent apoptosis coupled to activation of caspase-9, -2 and -3. Involved in innate immune response by acting as an integral adapter in the assembly of various inflammasomes (NLRP2, NLRP3, NLRP6 and AIM2) which recruit and activate caspase-1 leading to processing and secretion of pro-inflammatory cytokines. Caspase-1-dependent inflammation leads to macrophage pyroptosis, a form of cell death. The function as activating adapter in different types of inflammasomes is mediated by the pyrin and CARD domains and their homotypic interactions. Clustered PYCARD nucleates the formation of caspase-1 filaments through the interaction of their respective CARD domains, acting as a platform for of caspase-1 polymerization. In the NLRC4 inflammasomes seems not be required but facilitates the processing of procaspase-1. In cooperation with NOD2 involved in an inflammasome activated by bacterial muramyl dipeptide leading to caspase-1 activation. May be involved in RIGI-triggered pro-inflammatory responses and inflammasome activation. In collaboration with AIM2 which detects cytosolic double-stranded DNA may also be involved in a caspase-1-independent cell death that involves caspase-8. In adaptive immunity may be involved in maturation of dendritic cells to stimulate T-cell immunity and in cytoskeletal rearrangements coupled to chemotaxis and antigen uptake may be involved in post-transcriptional regulation of the guanine nucleotide exchange factor DOCK2; the latter function is proposed to involve the nuclear form. Also involved in transcriptional activation of cytokines and chemokines independent of the inflammasome; this function may involve AP-1, NF-kappa-B, MAPK and caspase-8 signaling pathways. For regulation of NF-kappa-B activating and inhibiting functions have been reported. Modulates NF-kappa-B induction at the level of the IKK complex by inhibiting kinase activity of CHUK and IKBK. Proposed to compete with RIPK2 for association with CASP1 thereby down-regulating CASP1-mediated RIPK2-dependent NF-kappa-B activation and activating interleukin-1 beta processing. Modulates host resistance to DNA virus infection, probably by inducing the cleavage of and inactivating CGAS in presence of cytoplasmic double-stranded DNA. In Mus musculus (Mouse), this protein is Apoptosis-associated speck-like protein containing a CARD (Pycard).